The chain runs to 56 residues: Large ribosomal subunit protein bL32 (56 aa).

Positions 1 to 34 are disordered; sequence MAVQQNKPSRSKRGMRRAHDALKTSTISVDKTSG.

This sequence belongs to the bacterial ribosomal protein bL32 family.

This chain is Large ribosomal subunit protein bL32, found in Baumannia cicadellinicola subsp. Homalodisca coagulata.